Here is a 229-residue protein sequence, read N- to C-terminus: ATP-dependent dethiobiotin synthetase BioD (229 aa).

Position 12-17 (Gly-12–Val-17) interacts with ATP. A Mg(2+)-binding site is contributed by Thr-16. Lys-37 is a catalytic residue. Residue Thr-41 coordinates substrate. Residues Asp-53, Glu-112–Gly-115, and Pro-201–Gly-203 contribute to the ATP site. Positions 53 and 112 each coordinate Mg(2+).

It belongs to the dethiobiotin synthetase family. As to quaternary structure, homodimer. Requires Mg(2+) as cofactor.

Its subcellular location is the cytoplasm. The enzyme catalyses (7R,8S)-7,8-diammoniononanoate + CO2 + ATP = (4R,5S)-dethiobiotin + ADP + phosphate + 3 H(+). It functions in the pathway cofactor biosynthesis; biotin biosynthesis; biotin from 7,8-diaminononanoate: step 1/2. Catalyzes a mechanistically unusual reaction, the ATP-dependent insertion of CO2 between the N7 and N8 nitrogen atoms of 7,8-diaminopelargonic acid (DAPA, also called 7,8-diammoniononanoate) to form a ureido ring. The protein is ATP-dependent dethiobiotin synthetase BioD of Mycobacterium sp. (strain KMS).